The following is a 327-amino-acid chain: Aspartate--ammonia ligase (327 aa).

Belongs to the class-II aminoacyl-tRNA synthetase family. AsnA subfamily.

The protein localises to the cytoplasm. It carries out the reaction L-aspartate + NH4(+) + ATP = L-asparagine + AMP + diphosphate + H(+). Its pathway is amino-acid biosynthesis; L-asparagine biosynthesis; L-asparagine from L-aspartate (ammonia route): step 1/1. This is Aspartate--ammonia ligase from Mycoplasmoides gallisepticum (strain R(low / passage 15 / clone 2)) (Mycoplasma gallisepticum).